The sequence spans 316 residues: NAD kinase 1 (316 aa).

Asp-67 serves as the catalytic Proton acceptor. 67–68 (DG) contributes to the NAD(+) binding site. The tract at residues 132–151 (RSAEERADAPTPLQQPDVED) is disordered. Residues 160-161 (ND), Arg-190, and Asp-192 each bind NAD(+).

It belongs to the NAD kinase family. The cofactor is a divalent metal cation.

The protein localises to the cytoplasm. The catalysed reaction is NAD(+) + ATP = ADP + NADP(+) + H(+). Functionally, involved in the regulation of the intracellular balance of NAD and NADP, and is a key enzyme in the biosynthesis of NADP. Catalyzes specifically the phosphorylation on 2'-hydroxyl of the adenosine moiety of NAD to yield NADP. This chain is NAD kinase 1, found in Parasynechococcus marenigrum (strain WH8102).